A 342-amino-acid polypeptide reads, in one-letter code: Inactive chitinase-like protein 2 (342 aa).

The first 19 residues, 1–19, serve as a signal peptide directing secretion; the sequence is MKEIVRALEGYGPPKDKAA. The Chitin-binding type-1 domain maps to 20 to 60; that stretch reads EQCGWQAGGALCPGGLCCSQYGWCANTPEYCGSGCQSQCDG. Disulfide bonds link cysteine 22–cysteine 37, cysteine 31–cysteine 43, cysteine 36–cysteine 80, cysteine 84–cysteine 88, cysteine 122–cysteine 184, cysteine 196–cysteine 204, and cysteine 301–cysteine 333.

Belongs to the glycosyl hydrolase 19 family. Chitinase class I subfamily.

Its function is as follows. Inactive chitinase-like protein that does not exhibit hydrolytic activity toward chitin. Binds strongly to chitin and possesses antifungal activity toward the fungal pathogen Altenaria alternata in plate assays. Probably involved in defense against fungal pathogens through a mechanism that only involves carbohydrate binding. This chain is Inactive chitinase-like protein 2, found in Hevea brasiliensis (Para rubber tree).